A 256-amino-acid polypeptide reads, in one-letter code: Triosephosphate isomerase (256 aa).

10 to 12 (NWK) provides a ligand contact to substrate. His-99 serves as the catalytic Electrophile. Glu-171 acts as the Proton acceptor in catalysis. Residues Gly-177, Ser-216, and 237 to 238 (GG) contribute to the substrate site.

It belongs to the triosephosphate isomerase family. Homodimer.

The protein localises to the cytoplasm. The catalysed reaction is D-glyceraldehyde 3-phosphate = dihydroxyacetone phosphate. It participates in carbohydrate biosynthesis; gluconeogenesis. Its pathway is carbohydrate degradation; glycolysis; D-glyceraldehyde 3-phosphate from glycerone phosphate: step 1/1. Functionally, involved in the gluconeogenesis. Catalyzes stereospecifically the conversion of dihydroxyacetone phosphate (DHAP) to D-glyceraldehyde-3-phosphate (G3P). In Colwellia psychrerythraea (strain 34H / ATCC BAA-681) (Vibrio psychroerythus), this protein is Triosephosphate isomerase.